The following is a 485-amino-acid chain: 6-phosphogluconate dehydrogenase, decarboxylating (485 aa).

Residues G12 to G17, N35 to T37, V77 to A79, and N105 contribute to the NADP(+) site. Residues N105 and S131–G133 each bind substrate. Catalysis depends on K186, which acts as the Proton acceptor. Residue H189–N190 coordinates substrate. Residue E193 is the Proton donor of the active site. Substrate is bound by residues Y194, K263, R290, R449, and H455.

It belongs to the 6-phosphogluconate dehydrogenase family. Homodimer.

It catalyses the reaction 6-phospho-D-gluconate + NADP(+) = D-ribulose 5-phosphate + CO2 + NADPH. The protein operates within carbohydrate degradation; pentose phosphate pathway; D-ribulose 5-phosphate from D-glucose 6-phosphate (oxidative stage): step 3/3. Its function is as follows. Catalyzes the oxidative decarboxylation of 6-phosphogluconate to ribulose 5-phosphate and CO(2), with concomitant reduction of NADP to NADPH. This Cunninghamella elegans protein is 6-phosphogluconate dehydrogenase, decarboxylating (6-PGD).